Consider the following 415-residue polypeptide: Beta-1,4-glucuronyltransferase 1 (415 aa).

Residues 1–8 (MQMSYAIR) are Cytoplasmic-facing. A helical; Signal-anchor for type II membrane protein transmembrane segment spans residues 9–36 (CAFYQLLLAALMLVAMLQLLYLSLLSGL). The Lumenal segment spans residues 37 to 415 (HGQEEQEQYF…ARYPNSPHRC (379 aa)). Residue Asn-204 is glycosylated (N-linked (GlcNAc...) asparagine). Residues Asp-227 and Asp-229 each contribute to the Mn(2+) site. Asn-300 carries an N-linked (GlcNAc...) asparagine glycan.

This sequence belongs to the glycosyltransferase 49 family. In terms of assembly, interacts with LARGE1 and LARGE2. Mn(2+) is required as a cofactor.

Its subcellular location is the golgi apparatus membrane. The catalysed reaction is 3-O-[beta-D-Xyl-(1-&gt;4)-Rib-ol-P-Rib-ol-P-3-beta-D-GalNAc-(1-&gt;3)-beta-D-GlcNAc-(1-&gt;4)-(O-6-P-alpha-D-Man)]-Thr-[protein] + UDP-alpha-D-glucuronate = 3-O-[beta-D-GlcA-(1-&gt;3)-beta-D-Xyl-(1-&gt;4)-Rib-ol-P-Rib-ol-P-3-beta-D-GalNAc-(1-&gt;3)-beta-D-GlcNAc-(1-&gt;4)-(O-6-P-alpha-D-Man)]-Thr-[protein] + UDP + H(+). It functions in the pathway protein modification; protein glycosylation. Its function is as follows. Beta-1,4-glucuronyltransferase involved in O-mannosylation of alpha-dystroglycan (DAG1). Transfers a glucuronic acid (GlcA) residue onto a xylose (Xyl) acceptor to produce the glucuronyl-beta-1,4-xylose-beta disaccharide primer, which is further elongated by LARGE1, during synthesis of phosphorylated O-mannosyl glycan. Phosphorylated O-mannosyl glycan is a carbohydrate structure present in alpha-dystroglycan (DAG1), which is required for binding laminin G-like domain-containing extracellular proteins with high affinity. Required for axon guidance; via its function in O-mannosylation of alpha-dystroglycan (DAG1). The chain is Beta-1,4-glucuronyltransferase 1 from Mus musculus (Mouse).